The sequence spans 138 residues: ATP synthase epsilon chain (138 aa).

The protein belongs to the ATPase epsilon chain family. In terms of assembly, F-type ATPases have 2 components, CF(1) - the catalytic core - and CF(0) - the membrane proton channel. CF(1) has five subunits: alpha(3), beta(3), gamma(1), delta(1), epsilon(1). CF(0) has three main subunits: a, b and c.

The protein localises to the cell inner membrane. Its function is as follows. Produces ATP from ADP in the presence of a proton gradient across the membrane. This is ATP synthase epsilon chain from Vesicomyosocius okutanii subsp. Calyptogena okutanii (strain HA).